Consider the following 488-residue polypeptide: Glycogen synthase (488 aa).

Lysine 17 contacts ADP-alpha-D-glucose.

It belongs to the glycosyltransferase 1 family. Bacterial/plant glycogen synthase subfamily.

It catalyses the reaction [(1-&gt;4)-alpha-D-glucosyl](n) + ADP-alpha-D-glucose = [(1-&gt;4)-alpha-D-glucosyl](n+1) + ADP + H(+). Its pathway is glycan biosynthesis; glycogen biosynthesis. Its function is as follows. Synthesizes alpha-1,4-glucan chains using ADP-glucose. The sequence is that of Glycogen synthase from Nitratidesulfovibrio vulgaris (strain DSM 19637 / Miyazaki F) (Desulfovibrio vulgaris).